A 283-amino-acid chain; its full sequence is Myeloid differentiation primary response protein MyD88-B (283 aa).

Positions 27–105 constitute a Death domain; the sequence is RLCLYLNPNA…DILTDLAPLI (79 aa). The segment at 106–143 is intermediate domain; it reads EADCKKYLEKKHGPLPLQDDNVDSSEQYRITKSDDPYG. A TIR domain is found at 147-281; the sequence is ETFDAFICCC…WFWDKLAKAL (135 aa).

The protein resides in the cytoplasm. Its function is as follows. Adapter protein involved in the Toll-like receptor and IL-1 receptor signaling pathway in the innate immune response. Activates expression of target genes in the Spemann organizer region during early embryonic development. Is required for normal axis formation. The sequence is that of Myeloid differentiation primary response protein MyD88-B (myd88-b) from Xenopus laevis (African clawed frog).